A 210-amino-acid chain; its full sequence is LexA repressor (210 aa).

A DNA-binding region (H-T-H motif) is located at residues 28-48 (FEEIAEGMGLSSLATVHKHIG). Catalysis depends on for autocatalytic cleavage activity residues S131 and K169.

It belongs to the peptidase S24 family. Homodimer.

It catalyses the reaction Hydrolysis of Ala-|-Gly bond in repressor LexA.. Represses a number of genes involved in the response to DNA damage (SOS response), including recA and lexA. In the presence of single-stranded DNA, RecA interacts with LexA causing an autocatalytic cleavage which disrupts the DNA-binding part of LexA, leading to derepression of the SOS regulon and eventually DNA repair. The sequence is that of LexA repressor from Koribacter versatilis (strain Ellin345).